The sequence spans 129 residues: Insulin-like growth factor 2 (129 aa).

Positions 1–24 (MGVPMGKSLLAPLTFLALASCCFA) are cleaved as a signal peptide. The b stretch occupies residues 25 to 52 (AYRPSETLCGGELVDTLQFVCGDRGFYF). Disulfide bonds link cysteine 33–cysteine 72, cysteine 45–cysteine 85, and cysteine 71–cysteine 76. Positions 53 to 65 (SRPASRVSRRSSR) are c. The a stretch occupies residues 66–86 (GIVEECCFRSCDLALLETYCA). The tract at residues 87 to 92 (TPAKSE) is d. The propeptide at 93 to 129 (RDVSTPPTVLPDNFPRYPVGKFFQYDTWKQSAQRLRR) is e peptide.

It belongs to the insulin family. Interacts with MYORG; this interaction is required for IGF2 secretion. Interacts with integrins ITGAV:ITGB3 and ITGA6:ITGB4; integrin-binding is required for IGF2 signaling. In terms of processing, proteolytically processed by PCSK4, proIGF2 is cleaved at Arg-129 and Arg-92 to generate big-IGF2 and mature IGF2.

Its subcellular location is the secreted. In terms of biological role, the insulin-like growth factors possess growth-promoting activity. Major fetal growth hormone in mammals. Plays a key role in regulating fetoplacental development. IGF2 is influenced by placental lactogen. Also involved in tissue differentiation. In adults, involved in glucose metabolism in adipose tissue, skeletal muscle and liver. Acts as a ligand for integrin which is required for IGF2 signaling. Positively regulates myogenic transcription factor MYOD1 function by facilitating the recruitment of transcriptional coactivators, thereby controlling muscle terminal differentiation. Inhibits myoblast differentiation and modulates metabolism via increasing the mitochondrial respiration rate. Its function is as follows. Preptin undergoes glucose-mediated co-secretion with insulin, and acts as a physiological amplifier of glucose-mediated insulin secretion. Exhibits osteogenic properties by increasing osteoblast mitogenic activity through phosphoactivation of MAPK1 and MAPK3. This chain is Insulin-like growth factor 2, found in Neovison vison (American mink).